Reading from the N-terminus, the 414-residue chain is 2-acylphloroglucinol 4-prenyltransferase (414 aa).

A chloroplast-targeting transit peptide spans 1 to 86 (MELSSVSSFS…LKPLSIFSCK (86 aa)). The next 8 helical transmembrane spans lie at 153-173 (FSWP…GSCF), 201-221 (ISVE…FILI), 229-249 (LLTS…VPPF), 256-276 (ITAF…VYYA), 281-301 (LGLA…ITFM), 336-356 (LLGT…AIIW), 359-379 (AFKS…LFFQ), and 394-414 (KSFY…YLFI).

Belongs to the UbiA prenyltransferase family. Component an active demethylxanthohumol (DMX) biosynthetic metabolon in glandular trichomes (lupulin glands) that encompasses a chalcone synthase (CHS) and a membrane-bound prenyltransferase. Interacts with PT2, forming a functional metabolon. Interacts with CHIL2; this interaction promotes catalytic activity. Requires Mg(2+) as cofactor. Expressed in trichomes.

It localises to the plastid. Its subcellular location is the chloroplast membrane. The enzyme catalyses 2',4,4',6'-tetrahydroxychalcone + dimethylallyl diphosphate = desmethylxanthohumol + diphosphate. It catalyses the reaction a 2-acylphloroglucinol + dimethylallyl diphosphate = a 2-acyl-4-prenylphloroglucinol + diphosphate. The protein operates within secondary metabolite biosynthesis. Its activity is regulated as follows. Stimulated by CHIL2 but inhibited by CHIL1. Functionally, involved in the biosynthesis of prenylated phenolics natural products which contribute to the bitter taste of beer and display broad biological activities. Catalyzes the first prenylation step in the beta-bitter acid pathway. Uses dimethylallyl diphosphate (DMAPP) as the prenyl donor. This chain is 2-acylphloroglucinol 4-prenyltransferase, found in Humulus lupulus (European hop).